Reading from the N-terminus, the 338-residue chain is Ketol-acid reductoisomerase (NADP(+)) (338 aa).

The KARI N-terminal Rossmann domain occupies 1–181 (MKVFYDKDCD…GGGRTGIIET (181 aa)). NADP(+) contacts are provided by residues 24–27 (YGSQ), Arg47, Ser50, Thr52, and 82–85 (DEFQ). His107 is a catalytic residue. Gly133 provides a ligand contact to NADP(+). The region spanning 182–327 (TFKDETETDL…EKLRSMMPWI (146 aa)) is the KARI C-terminal knotted domain. Residues Asp190, Glu194, Glu226, and Glu230 each contribute to the Mg(2+) site. Ser251 contacts substrate.

It belongs to the ketol-acid reductoisomerase family. Requires Mg(2+) as cofactor.

It catalyses the reaction (2R)-2,3-dihydroxy-3-methylbutanoate + NADP(+) = (2S)-2-acetolactate + NADPH + H(+). It carries out the reaction (2R,3R)-2,3-dihydroxy-3-methylpentanoate + NADP(+) = (S)-2-ethyl-2-hydroxy-3-oxobutanoate + NADPH + H(+). It participates in amino-acid biosynthesis; L-isoleucine biosynthesis; L-isoleucine from 2-oxobutanoate: step 2/4. The protein operates within amino-acid biosynthesis; L-valine biosynthesis; L-valine from pyruvate: step 2/4. Involved in the biosynthesis of branched-chain amino acids (BCAA). Catalyzes an alkyl-migration followed by a ketol-acid reduction of (S)-2-acetolactate (S2AL) to yield (R)-2,3-dihydroxy-isovalerate. In the isomerase reaction, S2AL is rearranged via a Mg-dependent methyl migration to produce 3-hydroxy-3-methyl-2-ketobutyrate (HMKB). In the reductase reaction, this 2-ketoacid undergoes a metal-dependent reduction by NADPH to yield (R)-2,3-dihydroxy-isovalerate. The polypeptide is Ketol-acid reductoisomerase (NADP(+)) (Pseudomonas syringae pv. tomato (strain ATCC BAA-871 / DC3000)).